Consider the following 204-residue polypeptide: Holliday junction branch migration complex subunit RuvA (204 aa).

A domain I region spans residues Met-1–Ala-64. Residues Gln-65–Glu-143 are domain II. Residues Ser-144–Ser-155 are flexible linker. The interval His-156–Leu-204 is domain III.

Belongs to the RuvA family. As to quaternary structure, homotetramer. Forms an RuvA(8)-RuvB(12)-Holliday junction (HJ) complex. HJ DNA is sandwiched between 2 RuvA tetramers; dsDNA enters through RuvA and exits via RuvB. An RuvB hexamer assembles on each DNA strand where it exits the tetramer. Each RuvB hexamer is contacted by two RuvA subunits (via domain III) on 2 adjacent RuvB subunits; this complex drives branch migration. In the full resolvosome a probable DNA-RuvA(4)-RuvB(12)-RuvC(2) complex forms which resolves the HJ.

It is found in the cytoplasm. In terms of biological role, the RuvA-RuvB-RuvC complex processes Holliday junction (HJ) DNA during genetic recombination and DNA repair, while the RuvA-RuvB complex plays an important role in the rescue of blocked DNA replication forks via replication fork reversal (RFR). RuvA specifically binds to HJ cruciform DNA, conferring on it an open structure. The RuvB hexamer acts as an ATP-dependent pump, pulling dsDNA into and through the RuvAB complex. HJ branch migration allows RuvC to scan DNA until it finds its consensus sequence, where it cleaves and resolves the cruciform DNA. This is Holliday junction branch migration complex subunit RuvA from Haemophilus influenzae (strain PittEE).